A 535-amino-acid chain; its full sequence is PAC-1 interacting and coiled-coil domain-containing protein 1 (535 aa).

Residues 1 to 67 (MIITTPRRAN…KQTPPRSPVI (67 aa)) form a disordered region. Low complexity predominate over residues 36–57 (SSTTPSSIGSSSSSSSSYASST). 2 coiled-coil regions span residues 109-172 (KLQY…RDLS) and 198-242 (SLMK…RQSL). Disordered stretches follow at residues 254–277 (NESEDLGCGSSEQSGGSEGHNDEE) and 503–535 (TCRPTTTLISSTQPAQRSVSVEKNNNNNVHTHN). Over residues 503–525 (TCRPTTTLISSTQPAQRSVSVEK) the composition is skewed to polar residues. Over residues 526-535 (NNNNNVHTHN) the composition is skewed to low complexity.

Belongs to the CCDC85 family. Interacts with pac-1 and jac-1.

The protein localises to the cell junction. It localises to the adherens junction. Linker protein which helps to recruit the Rho GTPase-activating protein, pac-1, to adherens junctions. The chain is PAC-1 interacting and coiled-coil domain-containing protein 1 from Caenorhabditis elegans.